A 191-amino-acid polypeptide reads, in one-letter code: Zinc finger protein GIS2 (191 aa).

The C2H2-type zinc-finger motif lies at 55-77 (FKCHYCFRNFPTSQALGGHQNAH).

Expressed in inflorescence meristems, floral meristems and stem epidermis.

It localises to the nucleus. Its function is as follows. Probable transcription factor required for the initiation of inflorescence trichomes in response to gibberellin and cytokinin. Is not involved in the regulation of trichome branching. Is functionally equivalent to ZFP8. The chain is Zinc finger protein GIS2 (GIS2) from Arabidopsis thaliana (Mouse-ear cress).